Reading from the N-terminus, the 201-residue chain is Small ribosomal subunit protein uS4c (201 aa).

The interval 20-44 is disordered; that stretch reads GLTSKRPRAGSDLRNQSRSGKKSQY. One can recognise an S4 RNA-binding domain in the interval 89–152; the sequence is MRLDNILFRL…NSRTLVQNLL (64 aa).

Belongs to the universal ribosomal protein uS4 family. Part of the 30S ribosomal subunit. Contacts protein S5. The interaction surface between S4 and S5 is involved in control of translational fidelity.

The protein localises to the plastid. The protein resides in the chloroplast. Its function is as follows. One of the primary rRNA binding proteins, it binds directly to 16S rRNA where it nucleates assembly of the body of the 30S subunit. With S5 and S12 plays an important role in translational accuracy. The protein is Small ribosomal subunit protein uS4c (rps4) of Aethionema cordifolium (Lebanon stonecress).